We begin with the raw amino-acid sequence, 447 residues long: Methionine aminopeptidase 2 (447 aa).

The interval 1–86 is disordered; sequence MAGATEGEDT…KNKKKKKKKI (86 aa). Over residues 8–32 the composition is skewed to basic and acidic residues; that stretch reads EDTKVIESKINELNIDKPKLEDNNE. Residues 43–60 are compositionally biased toward acidic residues; that stretch reads GGDDDDDKEDDDDNDEIT. The span at 71-86 shows a compositional bias: basic residues; sequence KKKKKNKNKKKKKKKI. His-198 contributes to the substrate binding site. The a divalent metal cation site is built by Asp-218, Asp-229, and His-300. His-308 provides a ligand contact to substrate. Residues Glu-333 and Glu-428 each coordinate a divalent metal cation.

The protein belongs to the peptidase M24A family. Methionine aminopeptidase eukaryotic type 2 subfamily. Co(2+) serves as cofactor. Zn(2+) is required as a cofactor. Requires Mn(2+) as cofactor. The cofactor is Fe(2+).

The protein localises to the cytoplasm. The enzyme catalyses Release of N-terminal amino acids, preferentially methionine, from peptides and arylamides.. Functionally, cotranslationally removes the N-terminal methionine from nascent proteins. The N-terminal methionine is often cleaved when the second residue in the primary sequence is small and uncharged (Met-Ala-, Cys, Gly, Pro, Ser, Thr, or Val). The protein is Methionine aminopeptidase 2 of Candida albicans (strain WO-1) (Yeast).